A 199-amino-acid polypeptide reads, in one-letter code: Transgelin-3 (199 aa).

In terms of domain architecture, Calponin-homology (CH) spans 24–136; sequence ADLENKLVDW…RTLMALGSVA (113 aa). The residue at position 163 (serine 163) is a Phosphoserine. The stretch at 174–199 is one Calponin-like repeat; it reads IGLQMGSNKGASQAGMTGYGMPRQIM. A compositionally biased stretch (polar residues) spans 178–188; it reads MGSNKGASQAG. The tract at residues 178–199 is disordered; that stretch reads MGSNKGASQAGMTGYGMPRQIM.

Belongs to the calponin family. Abundant and ubiquitous expression in neurons.

This is Transgelin-3 (Tagln3) from Rattus norvegicus (Rat).